Consider the following 235-residue polypeptide: Purine nucleoside phosphorylase DeoD-type (235 aa).

His4 contributes to the a purine D-ribonucleoside binding site. Phosphate contacts are provided by residues Gly20, Arg24, Arg43, and 87–90 (RVGT). A purine D-ribonucleoside contacts are provided by residues 179–181 (EME) and 203–204 (SD). The active-site Proton donor is the Asp204.

The protein belongs to the PNP/UDP phosphorylase family. As to quaternary structure, homohexamer; trimer of homodimers.

It catalyses the reaction a purine D-ribonucleoside + phosphate = a purine nucleobase + alpha-D-ribose 1-phosphate. The enzyme catalyses a purine 2'-deoxy-D-ribonucleoside + phosphate = a purine nucleobase + 2-deoxy-alpha-D-ribose 1-phosphate. Functionally, catalyzes the reversible phosphorolytic breakdown of the N-glycosidic bond in the beta-(deoxy)ribonucleoside molecules, with the formation of the corresponding free purine bases and pentose-1-phosphate. This Clostridium perfringens (strain SM101 / Type A) protein is Purine nucleoside phosphorylase DeoD-type.